A 262-amino-acid chain; its full sequence is MAAPSGTVSDSESSNSSSDAEELERCREAAMPAWGLEQRPHVAGKPRAGAANSQLSTSQPSLRHKVNEHEQDGNELQTTPEFRAHVAKKLGALLDSFITISEAAKEPAKAKVQKVALEDDGFRLFFTSVPGGREKEESPQPRRKRQPSSSSEDSDEEWRRCREAAVSASDILQESAIHSPGTVEKEAKKKRKLKKKAKKVASVDSAVAATTPTSMATVQKQKSGELNGDQVSLGTKKKKKAKKASETSPFPPAKSATAIPAN.

2 disordered regions span residues Met-1–Thr-79 and Phe-126–Asn-262. The segment covering Ser-9–Ser-18 has biased composition (low complexity). Residues Ala-51–Ser-61 show a composition bias toward polar residues. A Phosphoserine modification is found at Ser-61. Residue Thr-79 is modified to Phosphothreonine. Ser-138 bears the Phosphoserine mark. Thr-182 carries the phosphothreonine modification. Over residues Lys-188–Lys-199 the composition is skewed to basic residues. Residues Val-200–Ala-209 show a composition bias toward low complexity. Residues Thr-210–Gln-221 are compositionally biased toward polar residues. Residue Thr-211 is modified to Phosphothreonine. The Nucleolar localization signal (NLS) signature appears at Lys-236–Ala-241.

The protein belongs to the CUSTOS family.

It is found in the nucleus envelope. Its function is as follows. Plays a role in the regulation of Wnt signaling pathway during early development. This chain is Protein CUSTOS, found in Homo sapiens (Human).